We begin with the raw amino-acid sequence, 513 residues long: MEIFNVKLNDTSIRIIFCKTLSAFRTENTIVMLKGKAVSNGKPVSTEEIARVVEEKGVSEVIENLDGVFCILIYHFNDLLIGKSIQSGPALFYCKKNMDIFVSDKISDIKFLNPDMTFSLNITMAEHYLSGNRIATQESLITGIYKVNNGEFIKFNNQLKPVLLRDEFSITKKNNSTIDSIIDNIEMMRDNRKIALLFSGGLDSALIFHTLKESGNKFCAYHFFSDESDDSEKYFAKEYCSKYGVDFISVNKNINFNEKLYFNLNPNSPDEIPLIFEQTDEEGEGQPPIDDDLLYLCGHGGDHIFGQNPSELFGIDAYRSHGLMFMHKKIVEFSNLKGKRYKDIIFSNISAFINTSNGCSPAKQEHVSDMKLASAQFFATDYTGKINKLTPFLHKNIIQHYAGLPVFSLFNQHFDRYPVRYEAFQRFGSDIFWKKTKRSSSQLIFRILSGKKDELVNTIKQSGLIEILGINHIELESILYENTTTRLTMELPYILNLYRLAKFIQLQSIDYKG.

The 261-residue stretch at 176-436 folds into the Asparagine synthetase domain; that stretch reads STIDSIIDNI…FGSDIFWKKT (261 aa).

It is found in the cytoplasm. In terms of biological role, along with McjB, necessary and sufficient to process the inactive microcin J25 (McjA) precursor into the active peptide. May be involved in the formation of the amide bond between Gly-38 and Glu-53 of McjA. This Escherichia coli protein is Microcin J25-processing protein McjC (mcjC).